The sequence spans 129 residues: Small ribosomal subunit protein uS9 (129 aa).

Positions 107–129 (SRVVERKKPGKKKARRSPQFSKR) are disordered. Residues 114–129 (KPGKKKARRSPQFSKR) show a composition bias toward basic residues.

It belongs to the universal ribosomal protein uS9 family.

The protein is Small ribosomal subunit protein uS9 of Sulfurovum sp. (strain NBC37-1).